The chain runs to 346 residues: Fe(3+) ions import ATP-binding protein FbpC 1 (346 aa).

One can recognise an ABC transporter domain in the interval 5-235 (LEVDGVDKSF…PIDVPTAEFI (231 aa)). ATP is bound at residue 37-44 (GPSGCGKT).

It belongs to the ABC transporter superfamily. Fe(3+) ion importer (TC 3.A.1.10) family. In terms of assembly, the complex is composed of two ATP-binding proteins (FbpC), two transmembrane proteins (FbpB) and a solute-binding protein (FbpA).

The protein localises to the cell membrane. It catalyses the reaction Fe(3+)(out) + ATP + H2O = Fe(3+)(in) + ADP + phosphate + H(+). In terms of biological role, part of the ABC transporter complex FbpABC involved in Fe(3+) ions import. Responsible for energy coupling to the transport system. The chain is Fe(3+) ions import ATP-binding protein FbpC 1 from Rhodococcus jostii (strain RHA1).